Here is a 415-residue protein sequence, read N- to C-terminus: Tyrosine--tRNA ligase (415 aa).

Tyr34 contributes to the L-tyrosine binding site. The 'HIGH' region motif lies at 39 to 48; the sequence is PSADSLHLGN. Tyr162 and Gln166 together coordinate L-tyrosine. The 'KMSKS' region motif lies at 224–228; that stretch reads KFGKS. Lys227 serves as a coordination point for ATP. The 68-residue stretch at 346 to 413 folds into the S4 RNA-binding domain; sequence IKIIDLLNLA…KRNYFLILWN (68 aa).

It belongs to the class-I aminoacyl-tRNA synthetase family. TyrS type 1 subfamily. Homodimer.

It localises to the cytoplasm. The enzyme catalyses tRNA(Tyr) + L-tyrosine + ATP = L-tyrosyl-tRNA(Tyr) + AMP + diphosphate + H(+). In terms of biological role, catalyzes the attachment of tyrosine to tRNA(Tyr) in a two-step reaction: tyrosine is first activated by ATP to form Tyr-AMP and then transferred to the acceptor end of tRNA(Tyr). The polypeptide is Tyrosine--tRNA ligase (Ureaplasma parvum serovar 3 (strain ATCC 27815 / 27 / NCTC 11736)).